Reading from the N-terminus, the 390-residue chain is Heparan sulfate glucosamine 3-O-sulfotransferase 3B1 (390 aa).

Positions Met1–Pro25 are disordered. Topologically, residues Met1–Lys32 are cytoplasmic. A helical; Signal-anchor for type II membrane protein transmembrane segment spans residues Leu33–Gly53. Over Ser54–Asp390 the chain is Lumenal. Positions Thr79 to Ile125 are disordered. Asn82 carries N-linked (GlcNAc...) asparagine glycosylation. Residue Lys147–Arg151 participates in 3'-phosphoadenylyl sulfate binding. Substrate is bound by residues Glu169–Arg175 and Lys200–Ser203. Arg228 and Ser236 together coordinate 3'-phosphoadenylyl sulfate. Asn258 carries N-linked (GlcNAc...) asparagine glycosylation. Trp268–Ser269 provides a ligand contact to substrate. Residue Asn329 is glycosylated (N-linked (GlcNAc...) asparagine). A disulfide bond links Cys336 and Cys348. Residue Lys353 to His357 participates in 3'-phosphoadenylyl sulfate binding.

It belongs to the sulfotransferase 1 family.

It localises to the golgi apparatus membrane. The enzyme catalyses alpha-D-glucosaminyl-[heparan sulfate](n) + 3'-phosphoadenylyl sulfate = 3-sulfo-alpha-D-glucosaminyl-[heparan sulfate](n) + adenosine 3',5'-bisphosphate + H(+). In terms of biological role, sulfotransferase that utilizes 3'-phospho-5'-adenylyl sulfate (PAPS) to catalyze the transfer of a sulfo group to an N-unsubstituted glucosamine linked to a 2-O-sulfo iduronic acid unit on heparan sulfate. Catalyzes the O-sulfation of glucosamine in IdoUA2S-GlcNS and also in IdoUA2S-GlcNH2. Unlike HS3ST1/3-OST-1, does not convert non-anticoagulant heparan sulfate to anticoagulant heparan sulfate. The polypeptide is Heparan sulfate glucosamine 3-O-sulfotransferase 3B1 (Hs3st3b1) (Mus musculus (Mouse)).